Consider the following 235-residue polypeptide: Purine nucleoside phosphorylase DeoD-type (235 aa).

Position 4 (His4) interacts with a purine D-ribonucleoside. Residues Gly20, Arg24, Arg43, and 87 to 90 (RVGT) contribute to the phosphate site. Residues Glu162, 179–181 (EME), and 203–204 (SD) each bind a purine D-ribonucleoside. Catalysis depends on Asp204, which acts as the Proton donor.

It belongs to the PNP/UDP phosphorylase family. As to quaternary structure, homohexamer; trimer of homodimers.

The enzyme catalyses a purine D-ribonucleoside + phosphate = a purine nucleobase + alpha-D-ribose 1-phosphate. It catalyses the reaction a purine 2'-deoxy-D-ribonucleoside + phosphate = a purine nucleobase + 2-deoxy-alpha-D-ribose 1-phosphate. Catalyzes the reversible phosphorolytic breakdown of the N-glycosidic bond in the beta-(deoxy)ribonucleoside molecules, with the formation of the corresponding free purine bases and pentose-1-phosphate. This Bacillus cereus (strain B4264) protein is Purine nucleoside phosphorylase DeoD-type.